A 79-amino-acid chain; its full sequence is Small ribosomal subunit protein bS18 (79 aa).

This sequence belongs to the bacterial ribosomal protein bS18 family. In terms of assembly, part of the 30S ribosomal subunit. Forms a tight heterodimer with protein bS6.

In terms of biological role, binds as a heterodimer with protein bS6 to the central domain of the 16S rRNA, where it helps stabilize the platform of the 30S subunit. This Afipia carboxidovorans (strain ATCC 49405 / DSM 1227 / KCTC 32145 / OM5) (Oligotropha carboxidovorans) protein is Small ribosomal subunit protein bS18.